The sequence spans 463 residues: Retinoic acid receptor RXR-gamma (463 aa).

A modulating region spans residues 1-138 (MYGNYSHFMK…TSPGSLVKHI (138 aa)). A disordered region spans residues 18 to 53 (SPGHTGSTSMSPSAALSTGKPMDSHPSYTDTPVSAP). A compositionally biased stretch (polar residues) spans 21-33 (HTGSTSMSPSAAL). Residues 136–211 (KHICAICGDR…MGMKREAVQE (76 aa)) constitute a DNA-binding region (nuclear receptor). 2 consecutive NR C4-type zinc fingers follow at residues 139–159 (CAICGDRSSGKHYGVYSCEGC) and 175–199 (CRDNKDCLIDKRQRNRCQYCRYQKC). Residues 205-230 (KREAVQEERQRSRERAESEAECATSG) form a hinge region. In terms of domain architecture, NR LBD spans 231-459 (HEDMPVERIL…TFLMEMLETP (229 aa)).

It belongs to the nuclear hormone receptor family. NR2 subfamily. As to quaternary structure, homodimer. Heterodimer with a RAR molecule. Binds DNA preferentially as a RAR/RXR heterodimer. Interacts with RARA. Acetylated by EP300. Expressed in aortic endothelial cells (at protein level).

It localises to the nucleus. It is found in the cytoplasm. In terms of biological role, receptor for retinoic acid. Retinoic acid receptors bind as heterodimers to their target response elements in response to their ligands, all-trans or 9-cis retinoic acid, and regulate gene expression in various biological processes. The RAR/RXR heterodimers bind to the retinoic acid response elements (RARE) composed of tandem 5'-AGGTCA-3' sites known as DR1-DR5. The high affinity ligand for RXRs is 9-cis retinoic acid. This Homo sapiens (Human) protein is Retinoic acid receptor RXR-gamma (RXRG).